Reading from the N-terminus, the 424-residue chain is Probable serine/threonine-protein kinase PBL6 (424 aa).

A disordered region spans residues 1–26 (MGCFGRTPKSNKRSDTKTTKNNDFTP). Glycine 2 carries the N-myristoyl glycine lipid modification. Residue cysteine 3 is the site of S-palmitoyl cysteine attachment. Phosphothreonine is present on threonine 87. Residues 98-377 (FKSDCFLGEG…VVMALDHLAS (280 aa)) enclose the Protein kinase domain. ATP contacts are provided by residues 104 to 112 (LGEGGFGKV) and lysine 127. Residue tyrosine 172 is modified to Phosphotyrosine. Residue aspartate 225 is the Proton acceptor of the active site. Phosphoserine is present on residues serine 229 and serine 259. Residues threonine 260 and threonine 265 each carry the phosphothreonine modification. The residue at position 273 (tyrosine 273) is a Phosphotyrosine.

This sequence belongs to the protein kinase superfamily. Ser/Thr protein kinase family.

It is found in the cell membrane. It carries out the reaction L-seryl-[protein] + ATP = O-phospho-L-seryl-[protein] + ADP + H(+). The enzyme catalyses L-threonyl-[protein] + ATP = O-phospho-L-threonyl-[protein] + ADP + H(+). Its function is as follows. May be involved in plant defense signaling. This is Probable serine/threonine-protein kinase PBL6 from Arabidopsis thaliana (Mouse-ear cress).